We begin with the raw amino-acid sequence, 238 residues long: Protein FEV (238 aa).

The segment at residues 47-127 (IQLWQFLLEL…HGKRYAYRFD (81 aa)) is a DNA-binding region (ETS). The segment at 129–238 (QGLAQACQPP…AASHLGGHYH (110 aa)) is may mediate active transcriptional repression.

It belongs to the ETS family. As to expression, in brain, exclusively expressed in the major serotonergic neurons of the dorsal and median raphe nuclei located in the midbrain and pons. Also detected in prostate and small intestine.

It localises to the nucleus. Its function is as follows. Functions as a transcriptional regulator. According to PubMed:12761502, it functions as a transcriptional repressor. Functions in the differentiation and the maintenance of the central serotonergic neurons. May play a role in cell growth. This is Protein FEV (FEV) from Homo sapiens (Human).